A 141-amino-acid chain; its full sequence is Putative antiporter subunit mnhB2 (141 aa).

Helical transmembrane passes span 10–30 (TVTK…FLAG), 35–55 (GGGF…FLAF), 70–90 (ILMI…MFFG), and 116–136 (VFEA…MLSI).

It belongs to the CPA3 antiporters (TC 2.A.63) subunit B family. In terms of assembly, may form a heterooligomeric complex that consists of seven subunits: mnhA2, mnhB2, mnhC2, mnhD2, mnhE2, mnhF2 and mnhG2.

The protein resides in the cell membrane. This Staphylococcus saprophyticus subsp. saprophyticus (strain ATCC 15305 / DSM 20229 / NCIMB 8711 / NCTC 7292 / S-41) protein is Putative antiporter subunit mnhB2 (mnhB2).